A 327-amino-acid polypeptide reads, in one-letter code: DNA-directed RNA polymerase subunit alpha (327 aa).

The interval 1 to 233 is alpha N-terminal domain (alpha-NTD); the sequence is MVREKVKVST…NLFIPFLHVE (233 aa). Positions 267-327 are alpha C-terminal domain (alpha-CTD); that stretch reads LAFQYIFIDQ…KKILDILEKK (61 aa).

Belongs to the RNA polymerase alpha chain family. In terms of assembly, in plastids the minimal PEP RNA polymerase catalytic core is composed of four subunits: alpha, beta, beta', and beta''. When a (nuclear-encoded) sigma factor is associated with the core the holoenzyme is formed, which can initiate transcription.

It localises to the plastid. The protein resides in the chloroplast. The enzyme catalyses RNA(n) + a ribonucleoside 5'-triphosphate = RNA(n+1) + diphosphate. In terms of biological role, DNA-dependent RNA polymerase catalyzes the transcription of DNA into RNA using the four ribonucleoside triphosphates as substrates. This is DNA-directed RNA polymerase subunit alpha from Nasturtium officinale (Watercress).